Here is a 504-residue protein sequence, read N- to C-terminus: Transcription factor NDT80 (504 aa).

Disordered stretches follow at residues 64–172, 283–310, and 477–504; these read MHFN…QHHM, NGFP…NQHA, and RGRS…TPPQ. Composition is skewed to low complexity over residues 73–87, 103–145, 153–172, and 292–301; these read QQQQ…QQQQ, QGPT…ARQP, QQAQ…QHHM, and HPQNQPQNHP. The segment at residues 160-488 is a DNA-binding region (NDT80); it reads QADAQSQAQQ…RSPSSYHKDR (329 aa).

Its subcellular location is the nucleus. Its function is as follows. Meiosis-specific transcription factor that binds to the middle sporulation element (MSE) of targeted genes corresponding to the consensus sequence 5'-ACACAAA-3'. Acts as an activator of CDR1 induction by antifungal drugs. Modulates azole sensitivity by controlling the expression of ergosterol biosynthesis genes. Required for hyphal growth in response to different filament-inducing cues and for the proper expression of genes characterizing the filamentous transcriptional program including noteworthy genes encoding cell wall components, such as HWP1, ECE1, RBT4, and ALS3. Is essential for the completion of cell separation through the direct transcriptional regulation of genes encoding the chitinase CHT3 and the cell wall glucosidase SUN41. Required for biofilm formation and plays a key role in microcolony formation under both flow and static conditions and to epithelial surfaces. Essential for virulence. The polypeptide is Transcription factor NDT80 (Candida albicans (strain SC5314 / ATCC MYA-2876) (Yeast)).